A 296-amino-acid chain; its full sequence is N-acetylmuramic acid 6-phosphate etherase (296 aa).

The 164-residue stretch at 54-217 (VISCFQKGGR…STASMVGIGK (164 aa)) folds into the SIS domain. Glu82 (proton donor) is an active-site residue. Glu113 is an active-site residue.

This sequence belongs to the GCKR-like family. MurNAc-6-P etherase subfamily. In terms of assembly, homodimer.

The enzyme catalyses N-acetyl-D-muramate 6-phosphate + H2O = N-acetyl-D-glucosamine 6-phosphate + (R)-lactate. The protein operates within amino-sugar metabolism; N-acetylmuramate degradation. Specifically catalyzes the cleavage of the D-lactyl ether substituent of MurNAc 6-phosphate, producing GlcNAc 6-phosphate and D-lactate. This is N-acetylmuramic acid 6-phosphate etherase from Listeria monocytogenes serotype 4b (strain CLIP80459).